The following is a 213-amino-acid chain: Imidazole glycerol phosphate synthase subunit HisH 2 (213 aa).

In terms of domain architecture, Glutamine amidotransferase type-1 spans arginine 4–proline 211. Cysteine 82 functions as the Nucleophile in the catalytic mechanism. Active-site residues include histidine 186 and glutamate 188.

In terms of assembly, heterodimer of HisH and HisF.

It localises to the cytoplasm. It catalyses the reaction 5-[(5-phospho-1-deoxy-D-ribulos-1-ylimino)methylamino]-1-(5-phospho-beta-D-ribosyl)imidazole-4-carboxamide + L-glutamine = D-erythro-1-(imidazol-4-yl)glycerol 3-phosphate + 5-amino-1-(5-phospho-beta-D-ribosyl)imidazole-4-carboxamide + L-glutamate + H(+). It carries out the reaction L-glutamine + H2O = L-glutamate + NH4(+). It functions in the pathway amino-acid biosynthesis; L-histidine biosynthesis; L-histidine from 5-phospho-alpha-D-ribose 1-diphosphate: step 5/9. Its function is as follows. IGPS catalyzes the conversion of PRFAR and glutamine to IGP, AICAR and glutamate. The HisH subunit provides the glutamine amidotransferase activity that produces the ammonia necessary to HisF for the synthesis of IGP and AICAR. This chain is Imidazole glycerol phosphate synthase subunit HisH 2 (hisH2), found in Prochlorococcus marinus (strain MIT 9313).